Here is a 165-residue protein sequence, read N- to C-terminus: Protein SprT (165 aa).

The SprT-like domain maps to 20–163 (EKLTQANLKL…RCVHCGEQLV (144 aa)). His78 contributes to the Zn(2+) binding site. Glu79 is a catalytic residue. A Zn(2+)-binding site is contributed by His82.

Belongs to the SprT family. Zn(2+) is required as a cofactor.

Its subcellular location is the cytoplasm. This is Protein SprT from Escherichia coli O139:H28 (strain E24377A / ETEC).